A 338-amino-acid chain; its full sequence is Phosphoribosylformylglycinamidine cyclo-ligase (338 aa).

This sequence belongs to the AIR synthase family.

Its subcellular location is the cytoplasm. The catalysed reaction is 2-formamido-N(1)-(5-O-phospho-beta-D-ribosyl)acetamidine + ATP = 5-amino-1-(5-phospho-beta-D-ribosyl)imidazole + ADP + phosphate + H(+). Its pathway is purine metabolism; IMP biosynthesis via de novo pathway; 5-amino-1-(5-phospho-D-ribosyl)imidazole from N(2)-formyl-N(1)-(5-phospho-D-ribosyl)glycinamide: step 2/2. The protein is Phosphoribosylformylglycinamidine cyclo-ligase of Thermoplasma acidophilum (strain ATCC 25905 / DSM 1728 / JCM 9062 / NBRC 15155 / AMRC-C165).